The primary structure comprises 692 residues: Vitamin B12-dependent ribonucleoside-diphosphate reductase (692 aa).

The region spanning 7-95 (AKVRRRDGTL…IYRQRRAELR (89 aa)) is the ATP-cone domain. Substrate is bound by residues Ser177, 192–193 (GC), Gly221, 375–379 (NPCGE), and 520–524 (PTGTI). Cys193 and Cys388 are oxidised to a cystine. Catalysis depends on Asn375, which acts as the Proton acceptor. Cys377 functions as the Cysteine radical intermediate in the catalytic mechanism. Glu379 acts as the Proton acceptor in catalysis.

Belongs to the ribonucleoside diphosphate reductase class-2 family. Adenosylcob(III)alamin is required as a cofactor.

It catalyses the reaction a 2'-deoxyribonucleoside 5'-diphosphate + [thioredoxin]-disulfide + H2O = a ribonucleoside 5'-diphosphate + [thioredoxin]-dithiol. Its function is as follows. Provides the precursors necessary for DNA synthesis. Catalyzes the biosynthesis of deoxyribonucleotides from the corresponding ribonucleotides. The protein is Vitamin B12-dependent ribonucleoside-diphosphate reductase (nrdZ) of Mycobacterium tuberculosis (strain CDC 1551 / Oshkosh).